The following is a 481-amino-acid chain: Surface lipoprotein assembly modifier 1 (481 aa).

Residues 1–23 (MSIQTKFILFLSSSLFLTPYSVA) form the signal peptide. The N-terminal domain stretch occupies residues 25–192 (EKSPQPHDGR…QYLSALNQRD (168 aa)). The tract at residues 193–481 (QWKIQGGFSF…RIYVEISKTF (289 aa)) is C-terminal probable beta barrel. Transmembrane regions (beta stranded) follow at residues 194–204 (WKIQGGFSFLN), 233–243 (SYFGNAEKKWS), 248–258 (HFTKLSLEGSG), 271–281 (NARAGVGLGYQ), 285–295 (FELSLMPFTEK), 315–325 (SGARLDLSNWL), 329–338 (WQISTALEYG), 353–363 (YLASATLLYLA), 368–377 (YWFGGADYNR), 390–400 (KNVRLGWGQEW), 405–414 (STRLILNYAR), 432–441 (YASVLTIWHR), 448–458 (ITPKLSWSYQK), and 471–481 (NRIYVEISKTF).

This sequence belongs to the Slam family.

The protein resides in the cell outer membrane. In terms of biological role, required for correct export to the cell surface of some cell outer membrane lipoproteins. The sequence is that of Surface lipoprotein assembly modifier 1 from Haemophilus influenzae (strain ATCC 51907 / DSM 11121 / KW20 / Rd).